Here is a 582-residue protein sequence, read N- to C-terminus: Aspartate--tRNA(Asp/Asn) ligase (582 aa).

Glu177 is a binding site for L-aspartate. The tract at residues 201–204 (QLFK) is aspartate. Residue Arg223 participates in L-aspartate binding. ATP is bound by residues 223–225 (RDE) and Gln232. His447 is a binding site for L-aspartate. Glu481 provides a ligand contact to ATP. L-aspartate is bound at residue Arg488. Position 533-536 (533-536 (GLDR)) interacts with ATP.

It belongs to the class-II aminoacyl-tRNA synthetase family. Type 1 subfamily. As to quaternary structure, homodimer.

Its subcellular location is the cytoplasm. The catalysed reaction is tRNA(Asx) + L-aspartate + ATP = L-aspartyl-tRNA(Asx) + AMP + diphosphate. Its function is as follows. Aspartyl-tRNA synthetase with relaxed tRNA specificity since it is able to aspartylate not only its cognate tRNA(Asp) but also tRNA(Asn). Reaction proceeds in two steps: L-aspartate is first activated by ATP to form Asp-AMP and then transferred to the acceptor end of tRNA(Asp/Asn). The chain is Aspartate--tRNA(Asp/Asn) ligase from Chlamydia muridarum (strain MoPn / Nigg).